Here is a 197-residue protein sequence, read N- to C-terminus: Sec-independent protein translocase protein TatB (197 aa).

The chain crosses the membrane as a helical span at residues 1 to 21 (MFDIGFGELLLVMVLGLIVLG). The segment at 93–197 (KRGYTETPSP…ASARQPSDSR (105 aa)) is disordered. 2 stretches are compositionally biased toward basic and acidic residues: residues 104–113 (KSDDPKKSGD) and 160–169 (NHNDGRHATS). A compositionally biased stretch (low complexity) spans 180 to 197 (PEQSQPSAASARQPSDSR).

The protein belongs to the TatB family. In terms of assembly, the Tat system comprises two distinct complexes: a TatABC complex, containing multiple copies of TatA, TatB and TatC subunits, and a separate TatA complex, containing only TatA subunits. Substrates initially bind to the TatABC complex, which probably triggers association of the separate TatA complex to form the active translocon.

The protein localises to the cell inner membrane. Its function is as follows. Part of the twin-arginine translocation (Tat) system that transports large folded proteins containing a characteristic twin-arginine motif in their signal peptide across membranes. Together with TatC, TatB is part of a receptor directly interacting with Tat signal peptides. TatB may form an oligomeric binding site that transiently accommodates folded Tat precursor proteins before their translocation. The protein is Sec-independent protein translocase protein TatB of Pectobacterium atrosepticum (strain SCRI 1043 / ATCC BAA-672) (Erwinia carotovora subsp. atroseptica).